The primary structure comprises 289 residues: tRNA dimethylallyltransferase (289 aa).

9 to 16 (GTTASGKT) contacts ATP. Residue 11 to 16 (TASGKT) coordinates substrate. The interval 34 to 37 (DSLC) is interaction with substrate tRNA.

The protein belongs to the IPP transferase family. In terms of assembly, monomer. Mg(2+) serves as cofactor.

It carries out the reaction adenosine(37) in tRNA + dimethylallyl diphosphate = N(6)-dimethylallyladenosine(37) in tRNA + diphosphate. In terms of biological role, catalyzes the transfer of a dimethylallyl group onto the adenine at position 37 in tRNAs that read codons beginning with uridine, leading to the formation of N6-(dimethylallyl)adenosine (i(6)A). The protein is tRNA dimethylallyltransferase of Campylobacter jejuni (strain RM1221).